Here is a 177-residue protein sequence, read N- to C-terminus: Large ribosomal subunit protein uL5 (177 aa).

This sequence belongs to the universal ribosomal protein uL5 family. Part of the 50S ribosomal subunit; part of the 5S rRNA/L5/L18/L25 subcomplex. Contacts the 5S rRNA and the P site tRNA. Forms a bridge to the 30S subunit in the 70S ribosome.

This is one of the proteins that bind and probably mediate the attachment of the 5S RNA into the large ribosomal subunit, where it forms part of the central protuberance. In the 70S ribosome it contacts protein S13 of the 30S subunit (bridge B1b), connecting the 2 subunits; this bridge is implicated in subunit movement. Contacts the P site tRNA; the 5S rRNA and some of its associated proteins might help stabilize positioning of ribosome-bound tRNAs. This chain is Large ribosomal subunit protein uL5, found in Ehrlichia chaffeensis (strain ATCC CRL-10679 / Arkansas).